Consider the following 1185-residue polypeptide: Chromosome partition protein Smc (1185 aa).

An ATP-binding site is contributed by 34 to 41 (PNGSGKSN). Coiled coils occupy residues 174–376 (WRRS…EKDI) and 412–526 (ENIV…KLDV). The 111-residue stretch at 534 to 644 (VGEIISLQKK…CENIDNAFEI (111 aa)) folds into the SMC hinge domain. Positions 679 to 1039 (NIIGRKREIE…IDAMTEKMKG (361 aa)) form a coiled coil.

The protein belongs to the SMC family. In terms of assembly, homodimer.

The protein resides in the cytoplasm. Functionally, required for chromosome condensation and partitioning. This chain is Chromosome partition protein Smc, found in Clostridium kluyveri (strain NBRC 12016).